The chain runs to 96 residues: Antitoxin TacA3 (96 aa).

The neutralization domain stretch occupies residues 61-96; the sequence is YLTERDTKMIMEILDNPPAPNEKLLAAAFALPDMKK.

Belongs to the TacA antitoxin family. As to quaternary structure, forms a complex with cognate toxin TacT3. Forms a 4:2 antitoxin:toxin complex with cognate toxin TacT3. Forms a 4:4 antitoxin:toxin complex with promoter DNA, where 2 TacT3 dimers bridge 2 TacA3 dimers. Only TacA3 contacts promoter DNA.

Antitoxin component of a type II toxin-antitoxin (TA) system. Counteracts the toxic effect of cognate toxin TacT3, but not TacT1 or TacT2. Plays a role in persister cell formation. Its function is as follows. The TacA3-TacT3 complex both represses and derepresses expression of its own operon. The hexameric 4:2 TacA3-TacT3 complex binds promoter DNA and represses its transcription; both subunits are required. The octomeric 4:4 TacA3-TacT3 complex derepresses the operon. The shift from hexameric to octomeric complex probably alters DNA-binding, leading to dissociation from the operator DNA and derepression. Does not bind the promoter of the TacA1-TacT1 operon. The sequence is that of Antitoxin TacA3 from Salmonella typhimurium (strain 14028s / SGSC 2262).